A 555-amino-acid polypeptide reads, in one-letter code: Dihydroxy-acid dehydratase (555 aa).

A Mg(2+)-binding site is contributed by Asp78. Cys119 lines the [2Fe-2S] cluster pocket. Positions 120 and 121 each coordinate Mg(2+). Residue Lys121 is modified to N6-carboxylysine. A [2Fe-2S] cluster-binding site is contributed by Cys191. Position 444 (Glu444) interacts with Mg(2+). Ser470 serves as the catalytic Proton acceptor.

The protein belongs to the IlvD/Edd family. Homodimer. [2Fe-2S] cluster is required as a cofactor. It depends on Mg(2+) as a cofactor.

It carries out the reaction (2R)-2,3-dihydroxy-3-methylbutanoate = 3-methyl-2-oxobutanoate + H2O. The enzyme catalyses (2R,3R)-2,3-dihydroxy-3-methylpentanoate = (S)-3-methyl-2-oxopentanoate + H2O. It participates in amino-acid biosynthesis; L-isoleucine biosynthesis; L-isoleucine from 2-oxobutanoate: step 3/4. Its pathway is amino-acid biosynthesis; L-valine biosynthesis; L-valine from pyruvate: step 3/4. Functionally, functions in the biosynthesis of branched-chain amino acids. Catalyzes the dehydration of (2R,3R)-2,3-dihydroxy-3-methylpentanoate (2,3-dihydroxy-3-methylvalerate) into 2-oxo-3-methylpentanoate (2-oxo-3-methylvalerate) and of (2R)-2,3-dihydroxy-3-methylbutanoate (2,3-dihydroxyisovalerate) into 2-oxo-3-methylbutanoate (2-oxoisovalerate), the penultimate precursor to L-isoleucine and L-valine, respectively. This is Dihydroxy-acid dehydratase from Nitratidesulfovibrio vulgaris (strain DSM 19637 / Miyazaki F) (Desulfovibrio vulgaris).